A 93-amino-acid chain; its full sequence is Small ribosomal subunit protein uS19 (93 aa).

Belongs to the universal ribosomal protein uS19 family.

Its function is as follows. Protein S19 forms a complex with S13 that binds strongly to the 16S ribosomal RNA. The protein is Small ribosomal subunit protein uS19 of Clostridium perfringens (strain ATCC 13124 / DSM 756 / JCM 1290 / NCIMB 6125 / NCTC 8237 / Type A).